We begin with the raw amino-acid sequence, 430 residues long: Elongation factor Tu (430 aa).

The region spanning 13–220 (RPHLNIGTIG…ACDKYIALPE (208 aa)) is the tr-type G domain. The segment at 22-29 (GHVDHGKT) is G1. Residue 22–29 (GHVDHGKT) participates in GTP binding. Position 29 (Thr29) interacts with Mg(2+). Residues 66–70 (GITIS) form a G2 region. Residues 87 to 90 (DCPG) are G3. GTP-binding positions include 87 to 91 (DCPGH) and 142 to 145 (NKCD). The segment at 142 to 145 (NKCD) is G4. The G5 stretch occupies residues 188–190 (SAL).

Belongs to the TRAFAC class translation factor GTPase superfamily. Classic translation factor GTPase family. EF-Tu/EF-1A subfamily. In terms of assembly, monomer.

It is found in the cytoplasm. It catalyses the reaction GTP + H2O = GDP + phosphate + H(+). Functionally, GTP hydrolase that promotes the GTP-dependent binding of aminoacyl-tRNA to the A-site of ribosomes during protein biosynthesis. The protein is Elongation factor Tu of Neorickettsia sennetsu (strain ATCC VR-367 / Miyayama) (Ehrlichia sennetsu).